Here is a 475-residue protein sequence, read N- to C-terminus: Ribulose bisphosphate carboxylase large chain (475 aa).

The propeptide occupies 1–2 (MS). Position 3 is an N-acetylproline (Pro-3). An N6,N6,N6-trimethyllysine modification is found at Lys-14. Substrate contacts are provided by Asn-123 and Thr-173. Lys-175 serves as the catalytic Proton acceptor. Residue Lys-177 participates in substrate binding. Lys-201, Asp-203, and Glu-204 together coordinate Mg(2+). Lys-201 is modified (N6-carboxylysine). The active-site Proton acceptor is the His-294. The substrate site is built by Arg-295, His-327, and Ser-379.

It belongs to the RuBisCO large chain family. Type I subfamily. As to quaternary structure, heterohexadecamer of 8 large chains and 8 small chains; disulfide-linked. The disulfide link is formed within the large subunit homodimers. It depends on Mg(2+) as a cofactor. The disulfide bond which can form in the large chain dimeric partners within the hexadecamer appears to be associated with oxidative stress and protein turnover.

Its subcellular location is the plastid. It is found in the chloroplast. The enzyme catalyses 2 (2R)-3-phosphoglycerate + 2 H(+) = D-ribulose 1,5-bisphosphate + CO2 + H2O. It catalyses the reaction D-ribulose 1,5-bisphosphate + O2 = 2-phosphoglycolate + (2R)-3-phosphoglycerate + 2 H(+). In terms of biological role, ruBisCO catalyzes two reactions: the carboxylation of D-ribulose 1,5-bisphosphate, the primary event in carbon dioxide fixation, as well as the oxidative fragmentation of the pentose substrate in the photorespiration process. Both reactions occur simultaneously and in competition at the same active site. This chain is Ribulose bisphosphate carboxylase large chain, found in Platanus occidentalis (Sycamore).